Consider the following 939-residue polypeptide: Isoleucine--tRNA ligase (939 aa).

A 'HIGH' region motif is present at residues 57–67; the sequence is PYANGHIHLGH. Glutamate 561 lines the L-isoleucyl-5'-AMP pocket. Residues 602–606 carry the 'KMSKS' region motif; the sequence is KMSKS. Lysine 605 contributes to the ATP binding site. The Zn(2+) site is built by cysteine 903, cysteine 906, cysteine 923, and cysteine 926.

The protein belongs to the class-I aminoacyl-tRNA synthetase family. IleS type 1 subfamily. As to quaternary structure, monomer. Zn(2+) serves as cofactor.

The protein resides in the cytoplasm. The catalysed reaction is tRNA(Ile) + L-isoleucine + ATP = L-isoleucyl-tRNA(Ile) + AMP + diphosphate. In terms of biological role, catalyzes the attachment of isoleucine to tRNA(Ile). As IleRS can inadvertently accommodate and process structurally similar amino acids such as valine, to avoid such errors it has two additional distinct tRNA(Ile)-dependent editing activities. One activity is designated as 'pretransfer' editing and involves the hydrolysis of activated Val-AMP. The other activity is designated 'posttransfer' editing and involves deacylation of mischarged Val-tRNA(Ile). The sequence is that of Isoleucine--tRNA ligase from Desulfotalea psychrophila (strain LSv54 / DSM 12343).